Here is a 430-residue protein sequence, read N- to C-terminus: Asparagine--tRNA ligase (430 aa).

This sequence belongs to the class-II aminoacyl-tRNA synthetase family. In terms of assembly, homodimer.

Its subcellular location is the cytoplasm. It catalyses the reaction tRNA(Asn) + L-asparagine + ATP = L-asparaginyl-tRNA(Asn) + AMP + diphosphate + H(+). The sequence is that of Asparagine--tRNA ligase from Staphylococcus aureus (strain MSSA476).